Consider the following 275-residue polypeptide: Large ribosomal subunit protein uL2 (275 aa).

Disordered stretches follow at residues 38-59 (KKHAGRNNHGHITTRHRGGGHK) and 222-275 (GSAM…RKQK). 2 stretches are compositionally biased toward basic residues: residues 39–59 (KHAGRNNHGHITTRHRGGGHK) and 254–275 (MGKKTRHNPRTQRFIVRTRKQK).

Belongs to the universal ribosomal protein uL2 family. In terms of assembly, part of the 50S ribosomal subunit. Forms a bridge to the 30S subunit in the 70S ribosome.

Its function is as follows. One of the primary rRNA binding proteins. Required for association of the 30S and 50S subunits to form the 70S ribosome, for tRNA binding and peptide bond formation. It has been suggested to have peptidyltransferase activity; this is somewhat controversial. Makes several contacts with the 16S rRNA in the 70S ribosome. In Herpetosiphon aurantiacus (strain ATCC 23779 / DSM 785 / 114-95), this protein is Large ribosomal subunit protein uL2.